Here is a 159-residue protein sequence, read N- to C-terminus: U-actitoxin-Avd13b (159 aa).

The first 18 residues, Met1–Ala18, serve as a signal peptide directing secretion. Residues Gly19 to Pro26 constitute a propeptide that is removed on maturation. Disulfide bonds link Cys33–Cys45 and Cys36–Cys52. A propeptide spanning residues Glu59–Pro60 is cleaved from the precursor. 2 disulfide bridges follow: Cys67–Cys79 and Cys70–Cys86. Residues Glu93–Pro94 constitute a propeptide that is removed on maturation. 2 disulfides stabilise this stretch: Cys101–Cys113 and Cys104–Cys120. Residues Glu127–Pro128 constitute a propeptide that is removed on maturation. Disulfide bonds link Cys135–Cys147 and Cys138–Cys154.

It belongs to the sea anemone BBH family.

The protein localises to the secreted. It localises to the nematocyst. Its function is as follows. Inhibits ion channels. The polypeptide is U-actitoxin-Avd13b (Anemonia viridis (Snakelocks anemone)).